Here is a 462-residue protein sequence, read N- to C-terminus: Argininosuccinate lyase (462 aa).

Belongs to the lyase 1 family. Argininosuccinate lyase subfamily.

It localises to the cytoplasm. The catalysed reaction is 2-(N(omega)-L-arginino)succinate = fumarate + L-arginine. It functions in the pathway amino-acid biosynthesis; L-arginine biosynthesis; L-arginine from L-ornithine and carbamoyl phosphate: step 3/3. The chain is Argininosuccinate lyase from Bacillus cereus (strain AH820).